Consider the following 129-residue polypeptide: Large ribosomal subunit protein uL22 (129 aa).

It belongs to the universal ribosomal protein uL22 family. In terms of assembly, part of the 50S ribosomal subunit.

Functionally, this protein binds specifically to 23S rRNA; its binding is stimulated by other ribosomal proteins, e.g. L4, L17, and L20. It is important during the early stages of 50S assembly. It makes multiple contacts with different domains of the 23S rRNA in the assembled 50S subunit and ribosome. The globular domain of the protein is located near the polypeptide exit tunnel on the outside of the subunit, while an extended beta-hairpin is found that lines the wall of the exit tunnel in the center of the 70S ribosome. The sequence is that of Large ribosomal subunit protein uL22 from Phytoplasma sp. (strain STRAWB2).